The following is a 371-amino-acid chain: Probable palmitoyltransferase ZDHHC11B (371 aa).

The next 2 helical transmembrane spans lie at 43–63 (VVTWAVFVGLSLATFRIFIPL) and 70–90 (YIAYVVTGGIFSFHLVVHLIA). Residues 125-175 (QFCHLCKVTVNKKTKHCISCNKCVSGFDHHCKWINNCVGSRNYWFFFSTVA) enclose the DHHC domain. Catalysis depends on Cys-155, which acts as the S-palmitoyl cysteine intermediate. Helical transmembrane passes span 177–197 (ATAGMLCLIAILLYVLVQYLV), 216–236 (TWLLFLPLFPVQVQTLIVVII), and 239–259 (LVLLLDLLGLVQLGQLLIFHI). A disordered region spans residues 335–371 (DGDSKAQEADDAPSTSTLGLQQETTEPMKTDSAESED). The span at 347-359 (PSTSTLGLQQETT) shows a compositional bias: polar residues. A compositionally biased stretch (basic and acidic residues) spans 360–371 (EPMKTDSAESED).

Belongs to the DHHC palmitoyltransferase family.

The protein localises to the membrane. It catalyses the reaction L-cysteinyl-[protein] + hexadecanoyl-CoA = S-hexadecanoyl-L-cysteinyl-[protein] + CoA. In terms of biological role, probable palmitoyltransferase that could catalyze the addition of palmitate onto various protein substrates and be involved in a variety of cellular processes. May play a role in cell proliferation. The chain is Probable palmitoyltransferase ZDHHC11B from Homo sapiens (Human).